We begin with the raw amino-acid sequence, 291 residues long: Lipoyl synthase (291 aa).

Residues Cys-33, Cys-38, Cys-44, Cys-59, Cys-63, Cys-66, and Ser-274 each coordinate [4Fe-4S] cluster. Residues 45–263 (WGEGTATFLI…REAAEAMGFK (219 aa)) enclose the Radical SAM core domain.

Belongs to the radical SAM superfamily. Lipoyl synthase family. It depends on [4Fe-4S] cluster as a cofactor.

It is found in the cytoplasm. The enzyme catalyses [[Fe-S] cluster scaffold protein carrying a second [4Fe-4S](2+) cluster] + N(6)-octanoyl-L-lysyl-[protein] + 2 oxidized [2Fe-2S]-[ferredoxin] + 2 S-adenosyl-L-methionine + 4 H(+) = [[Fe-S] cluster scaffold protein] + N(6)-[(R)-dihydrolipoyl]-L-lysyl-[protein] + 4 Fe(3+) + 2 hydrogen sulfide + 2 5'-deoxyadenosine + 2 L-methionine + 2 reduced [2Fe-2S]-[ferredoxin]. Its pathway is protein modification; protein lipoylation via endogenous pathway; protein N(6)-(lipoyl)lysine from octanoyl-[acyl-carrier-protein]: step 2/2. Its function is as follows. Catalyzes the radical-mediated insertion of two sulfur atoms into the C-6 and C-8 positions of the octanoyl moiety bound to the lipoyl domains of lipoate-dependent enzymes, thereby converting the octanoylated domains into lipoylated derivatives. This is Lipoyl synthase from Pyrobaculum calidifontis (strain DSM 21063 / JCM 11548 / VA1).